The following is a 610-amino-acid chain: UvrABC system protein C (610 aa).

The GIY-YIG domain occupies 16–94 (SQPGVYRMYD…IKLYQPRYNV (79 aa)). Residues 204–239 (DQVLTQLIARMEKASQDLAFEEAARIRDQIQAVRRV) form the UVR domain.

It belongs to the UvrC family. Interacts with UvrB in an incision complex.

It localises to the cytoplasm. Its function is as follows. The UvrABC repair system catalyzes the recognition and processing of DNA lesions. UvrC both incises the 5' and 3' sides of the lesion. The N-terminal half is responsible for the 3' incision and the C-terminal half is responsible for the 5' incision. The chain is UvrABC system protein C from Salmonella heidelberg (strain SL476).